The primary structure comprises 313 residues: MKKQLIIGTRSSPLALWQAEFTKAELSRHFPELDITLKLVKTTGDVLLDSPLSKIGDMGLFTKDIEKHLIAKEIDLAVHSLKDVPTSTPEGLIITSFTEREDTRDVIISKGGAKLADLPLNAKVATSSLRRMSQLKSLRPDFEICDIRGNLNTRFKKFDEGEFDAMMLAYAGVFRLNFSDRISEILPHEIMLPAVGQGALGIETRVDDEQTREIVRILNHSNTEYCCKAERALLRHLQGGCQIPIGAYASFKNGTLKLLAFVGSVDGTVGINNEITRSGLTSPDQAEEAGIALAEELLKQGADKILSEIRKTR.

At C241 the chain carries S-(dipyrrolylmethanemethyl)cysteine.

This sequence belongs to the HMBS family. Monomer. The cofactor is dipyrromethane.

It carries out the reaction 4 porphobilinogen + H2O = hydroxymethylbilane + 4 NH4(+). Its pathway is porphyrin-containing compound metabolism; protoporphyrin-IX biosynthesis; coproporphyrinogen-III from 5-aminolevulinate: step 2/4. It participates in porphyrin-containing compound metabolism; chlorophyll biosynthesis. Functionally, tetrapolymerization of the monopyrrole PBG into the hydroxymethylbilane pre-uroporphyrinogen in several discrete steps. The polypeptide is Porphobilinogen deaminase (Chlorobium limicola (strain DSM 245 / NBRC 103803 / 6330)).